The chain runs to 306 residues: MAASENNMEEINPVLRISQLDAIELNKALEQLIWSQFSSCFQGFKPGLLTRFEPEIKASLCLFLWRYTIYTKNATVGQTILNMQYKNDLAVTKKYRPLNKQQKVWFALFLVGGKWLEERSFDLFSNHPFGASFQRTKYFLNAISGLLKFGALLNFLIFLQQGKFATLTERLLGIRSVFSRPQDVRQVGFEYMNREILWHGFAEFLIFLLPLINTQKLKSKLFSWCKPAKSHGVSDPSLAVICKECCLCGEWPAMPHTIGCSHVFCYYCIKSNYMSDMYFTCPKCSSQVHNLQPLEFKIEISEVHTL.

Over 1–15 the chain is Peroxisomal matrix; the sequence is MAASENNMEEINPVL. Residues 16 to 42 traverse the membrane as a helical segment; sequence RISQLDAIELNKALEQLIWSQFSSCFQ. The Cytoplasmic portion of the chain corresponds to 43 to 48; it reads GFKPGL. A helical transmembrane segment spans residues 49 to 74; the sequence is LTRFEPEIKASLCLFLWRYTIYTKNA. Over 75-98 the chain is Peroxisomal matrix; it reads TVGQTILNMQYKNDLAVTKKYRPL. Residues 99-125 form a helical membrane-spanning segment; the sequence is NKQQKVWFALFLVGGKWLEERSFDLFS. Topologically, residues 126–134 are cytoplasmic; the sequence is NHPFGASFQ. Residues 135–161 form a helical membrane-spanning segment; the sequence is RTKYFLNAISGLLKFGALLNFLIFLQQ. Over 162-188 the chain is Peroxisomal matrix; sequence GKFATLTERLLGIRSVFSRPQDVRQVG. The helical transmembrane segment at 189-212 threads the bilayer; that stretch reads FEYMNREILWHGFAEFLIFLLPLI. Topologically, residues 213–306 are cytoplasmic; sequence NTQKLKSKLF…KIEISEVHTL (94 aa). Positions 245, 248, 260, 262, 265, 268, 281, and 284 each coordinate Zn(2+). The segment at 245–285 adopts an RING-type zinc-finger fold; sequence CCLCGEWPAMPHTIGCSHVFCYYCIKSNYMSDMYFTCPKCS.

It belongs to the pex2/pex10/pex12 family. In terms of assembly, component of the PEX2-PEX10-PEX12 retrotranslocation channel.

It is found in the peroxisome membrane. It catalyses the reaction [E2 ubiquitin-conjugating enzyme]-S-ubiquitinyl-L-cysteine + [acceptor protein]-L-cysteine = [E2 ubiquitin-conjugating enzyme]-L-cysteine + [acceptor protein]-S-ubiquitinyl-L-cysteine.. It carries out the reaction S-ubiquitinyl-[E2 ubiquitin-conjugating enzyme]-L-cysteine + [acceptor protein]-L-lysine = [E2 ubiquitin-conjugating enzyme]-L-cysteine + N(6)-ubiquitinyl-[acceptor protein]-L-lysine.. Its pathway is protein modification; protein ubiquitination. E3 ubiquitin-protein ligase component of a retrotranslocation channel required for peroxisome organization by mediating export of the PEX5 receptor from peroxisomes to the cytosol, thereby promoting PEX5 recycling. The retrotranslocation channel is composed of PEX2, PEX10 and PEX12; each subunit contributing transmembrane segments that coassemble into an open channel that specifically allows the passage of PEX5 through the peroxisomal membrane. PEX2 also regulates peroxisome organization by acting as a E3 ubiquitin-protein ligase. The sequence is that of Peroxisome biogenesis factor 2 from Xenopus laevis (African clawed frog).